The chain runs to 154 residues: UPF0178 protein YaiI (154 aa).

This sequence belongs to the UPF0178 family.

This is UPF0178 protein YaiI from Escherichia coli (strain ATCC 8739 / DSM 1576 / NBRC 3972 / NCIMB 8545 / WDCM 00012 / Crooks).